Consider the following 255-residue polypeptide: Probable pyridoxal 5'-phosphate synthase subunit PDX2 (255 aa).

Gly46 to Ser48 is an L-glutamine binding site. The active-site Nucleophile is Cys78. L-glutamine-binding positions include Arg108 and Ile142–Arg143. Catalysis depends on charge relay system residues His202 and Glu204. Positions Gly225–Gln255 are disordered.

Belongs to the glutaminase PdxT/SNO family. In terms of assembly, interacts with PDX1.1 or PDX1.3, but not with PDX1.2. Binds to RPA2A. In terms of tissue distribution, strongly expressed in roots, stems, leaves and flowers.

It localises to the cytoplasm. It catalyses the reaction aldehydo-D-ribose 5-phosphate + D-glyceraldehyde 3-phosphate + L-glutamine = pyridoxal 5'-phosphate + L-glutamate + phosphate + 3 H2O + H(+). The enzyme catalyses L-glutamine + H2O = L-glutamate + NH4(+). The protein operates within cofactor biosynthesis; pyridoxal 5'-phosphate biosynthesis. Its function is as follows. Catalyzes the hydrolysis of glutamine to glutamate and ammonia as part of the biosynthesis of pyridoxal 5'-phosphate. The resulting ammonia molecule is channeled to the active site of PDX1. Involved in the indirect resistance to singlet oxygen-generating photosensitizers. The chain is Probable pyridoxal 5'-phosphate synthase subunit PDX2 (PDX2) from Arabidopsis thaliana (Mouse-ear cress).